The sequence spans 689 residues: Elongation factor G (689 aa).

In terms of domain architecture, tr-type G spans 8–282 (ERTRNIGIMA…GVVAYMPSPL (275 aa)). GTP contacts are provided by residues 17–24 (AHIDAGKT), 81–85 (DTPGH), and 135–138 (NKMD).

The protein belongs to the TRAFAC class translation factor GTPase superfamily. Classic translation factor GTPase family. EF-G/EF-2 subfamily.

The protein resides in the cytoplasm. In terms of biological role, catalyzes the GTP-dependent ribosomal translocation step during translation elongation. During this step, the ribosome changes from the pre-translocational (PRE) to the post-translocational (POST) state as the newly formed A-site-bound peptidyl-tRNA and P-site-bound deacylated tRNA move to the P and E sites, respectively. Catalyzes the coordinated movement of the two tRNA molecules, the mRNA and conformational changes in the ribosome. The protein is Elongation factor G of Alkaliphilus metalliredigens (strain QYMF).